Reading from the N-terminus, the 232-residue chain is uncharacterized protein (232 aa).

The helical transmembrane segment at 209–229 (ATISTPALGYAYFLFTLTLVF) threads the bilayer.

The protein localises to the host membrane. This is an uncharacterized protein from Saccharolobus islandicus (Sulfolobus islandicus).